The primary structure comprises 331 residues: Ferredoxin--NADP reductase 2 (331 aa).

7 residues coordinate FAD: Glu37, Gln45, Tyr50, Val90, Phe124, Asp286, and Thr327.

The protein belongs to the ferredoxin--NADP reductase type 2 family. As to quaternary structure, homodimer. FAD serves as cofactor.

It carries out the reaction 2 reduced [2Fe-2S]-[ferredoxin] + NADP(+) + H(+) = 2 oxidized [2Fe-2S]-[ferredoxin] + NADPH. The sequence is that of Ferredoxin--NADP reductase 2 from Listeria monocytogenes serovar 1/2a (strain ATCC BAA-679 / EGD-e).